Here is a 356-residue protein sequence, read N- to C-terminus: MFS-type transporter tazK (356 aa).

Helical transmembrane passes span 12 to 32, 42 to 62, 69 to 89, 102 to 122, 178 to 198, 211 to 231, 257 to 277, 288 to 308, and 320 to 340; these read LPFF…ALGH, FLGG…LADF, GVAV…GAIT, MTAW…FIIL, ILLS…LLFV, GAID…VGAF, LHPM…FAWT, ILAG…SLAY, and AISG…LFAP.

This sequence belongs to the major facilitator superfamily. CAR1 family.

It is found in the membrane. Functionally, MFS-type transporter; part of the gene cluster that mediates the biosynthesis of azaterrilone A and other azaphilones, a class of fungal metabolites characterized by a highly oxygenated pyrano-quinone bicyclic core and exhibiting a broad range of bioactivities. This chain is MFS-type transporter tazK, found in Aspergillus terreus (strain NIH 2624 / FGSC A1156).